The chain runs to 881 residues: DNA replication helicase (881 aa).

The disordered stretch occupies residues 1-32; it reads MESADILPGSRGTVDRRCEGSEEKITPPRPVE. The segment covering 13–32 has biased composition (basic and acidic residues); it reads TVDRRCEGSEEKITPPRPVE. 105–112 contacts ATP; sequence GNAGSGKS.

Belongs to the herpesviridae helicase family. Associates with the primase and the primase-associated factor to form the helicase-primase complex.

The protein localises to the host nucleus. In terms of biological role, component of the helicase/primase complex. Unwinds the DNA at the replication forks and generates single-stranded DNA for both leading and lagging strand synthesis. The primase synthesizes short RNA primers on the lagging strand that the polymerase elongates using dNTPs. Possesses helicase-like motifs and therefore may act as the helicase subunit of the complex. The sequence is that of DNA replication helicase from Equus caballus (Horse).